The sequence spans 351 residues: Putative NBPF family member NBPF5 (351 aa).

Coiled-coil stretches lie at residues 10-43 (SERA…EKFL) and 69-115 (DSVL…KLRE). The interval 157–285 (HLVHKLSPEN…VPPRHHDKSN (129 aa)) is disordered. Positions 165 to 179 (ENDEDEDEDEDDKDE) are enriched in acidic residues. The Olduvai domain maps to 174–261 (EDDKDEEVEK…EEEEALNIPP (88 aa)). Basic and acidic residues predominate over residues 192 to 202 (EVQKTEEKEVP). Residues 214–226 (SNSHNPSNSNQPH) are compositionally biased toward low complexity. Composition is skewed to basic and acidic residues over residues 232–251 (TFKE…HPHD) and 264–273 (QNDHEEEEGK).

It belongs to the NBPF family. As to expression, expressed in brain and medulla.

It localises to the cytoplasm. The sequence is that of Putative NBPF family member NBPF5 from Homo sapiens (Human).